Here is a 253-residue protein sequence, read N- to C-terminus: RNA polymerase sigma-F factor (253 aa).

Positions 61-74 (DLFQIGCIGLLKSV) match the Polymerase core binding motif. Residues 221 to 240 (QSEVAARLGISQVQVSRLEK) constitute a DNA-binding region (H-T-H motif).

This sequence belongs to the sigma-70 factor family.

In terms of biological role, sigma factors are initiation factors that promote the attachment of RNA polymerase to specific initiation sites and are then released. This sigma factor is responsible for the expression of sporulation specific genes. It is responsible for directing gene expression in the forespore compartment of developing cells of Bacillus. This Priestia megaterium (Bacillus megaterium) protein is RNA polymerase sigma-F factor (sigF).